A 538-amino-acid chain; its full sequence is MGASTFSQSFAEGYAAWALMLPALVGCALLIYRAFFAIRYPANLPLAGEPDGKRTFSWRTRWRYYIDCEALYKETYDNYTKHGKTVLLPGLGFRHDIVLPQSAMRDIMARPEKELSHADAVLELVQLKYSLGHEKYKADPWPCMLVKSDINSKLEAVCDGMNEELKYAFDKYVGCDTESWKEVDLLETIRMIIMAAASRFTVGFPLCRSEAYLRACWKVNDGIMMNGGLTGATPRLLRPIVGPLVTMKLRQSIEQVKKHVEPIYRQRVQALSQQNSAEKPASDETQDLFQQMLRYAQRERPGELHDLPSMCRRLCFANFAAVHQTTLLVTNMVLNIVSSDPQHNTISVLRDEVKDVIGPDSNAKWTKYKVAQMIKSDSVARETMRLYSNTNRGVFRKVLVEGIKTEDGIELPKGAYVSFLGRPLQCDPETFEDPFEYNPFRFSRIREQAPRDTKGRSSASHLSFVSTSPEHLPFGHGGHSCPGRFLVDFEVKMIVAYLLMNYDVEFPAEYKGQRPANRWMAEALMPPSGARIRIKRRS.

Residues 18–38 (ALMLPALVGCALLIYRAFFAI) form a helical membrane-spanning segment. C481 provides a ligand contact to heme.

Belongs to the cytochrome P450 family. Heme serves as cofactor.

The protein resides in the membrane. It functions in the pathway secondary metabolite biosynthesis; terpenoid biosynthesis. Its function is as follows. Cytochrome P450 monooxygenase; part of the gene cluster that mediates the biosynthesis of the sesquiterpenoid aspterric acid (AA), an inhibitor of dihydroxy-acid dehydratase (DHAD) effective as an herbicide. AstC catalyzes the third and last step within the pathway and converts the alpha-epoxy carboxylate intermediate produced by the cytochrome P450 monooxygenase astC from (-)daucane into the tricyclic aspterric acid. The polypeptide is Cytochrome P450 monooxygenase astC (Aspergillus terreus (strain NIH 2624 / FGSC A1156)).